The sequence spans 445 residues: StAR-related lipid transfer protein 3 (445 aa).

The Cytoplasmic portion of the chain corresponds to 1-51 (MSKLPGELARDLECSLPAVASLGSSLSHSQSLSSHLLPPPEKRRAISDVRR). One can recognise an MENTAL domain in the interval 46 to 217 (ISDVRRTFCL…YSPPESFAGS (172 aa)). A helical membrane pass occupies residues 52-72 (TFCLFVTFDLLFISLLWIIEL). At 73–94 (NTNTGIRKNLEQEIIQYNFKTS) the chain is on the extracellular side. A helical transmembrane segment spans residues 95-115 (FFDIFVLAFFRFSGLLLGYAV). The Cytoplasmic portion of the chain corresponds to 116 to 120 (LRLQH). The helical transmembrane segment at 121–141 (WWVIAVTTLVSSAFLIVKVIL) threads the bilayer. The Extracellular portion of the chain corresponds to 142 to 148 (SELLSKG). The chain crosses the membrane as a helical span at residues 149 to 169 (AFGYLLPIVSFVLAWLETWFL). At 170-445 (DFKVLPQEAE…QRISELGARA (276 aa)) the chain is on the cytoplasmic side. 2 consecutive short sequence motifs (FFAT) follow at residues 206–212 (QFYSPPE) and 207–212 (FYSPPE). Phosphoserine occurs at positions 209, 217, and 221. The 196-residue stretch at 248–443 (VVDQILAQEE…LRQRISELGA (196 aa)) folds into the START domain.

This sequence belongs to the STARD3 family. As to quaternary structure, homodimer. Interacts (via the MENTAL domain) with STARD3NL. Interacts (via phosphorylated FFAT motif) with VAPA (via MSP domain). Interacts (via phosphorylated FFAT motif) with VAPB (via MSP domain). Interacts (via phosphorylated FFAT motif) with MOSPD2 (via MSP domain); this interaction allows enrichment of MOSPD2 around endosomes. Phosphorylation at Ser-209 is necessary and sufficient for the direct interaction of the phosphorylated FFAT motif with the MSP domain of MOSPD2, VAPA and VAPB and allows the tethering of two membranes that participates in the formation of ER-endosome contacts. Phosphorylation of the FFAT motif leads to conformation changes. Additional phosphorylations around the core FFAT motif (QFYSPPE) are not essential but strengthen the interaction with MOSPD2, VAPA and VAPB. Phosphorylation at Ser-209 of FFAT motif drives membrane tethering between the endoplasmic reticulum and late endosomes via interaction with VAPA and VAPB that in turn allows the efficient transport of sterol mediated by the START domain. As to expression, present in retina. Localizes to all neurons of macular retina and especially cone inner segments and axons (at protein level).

The protein localises to the late endosome membrane. The enzyme catalyses cholesterol(in) = cholesterol(out). Functionally, sterol-binding protein that mediates cholesterol transport from the endoplasmic reticulum to endosomes. The sterol transport mechanism is triggered by phosphorylation of FFAT motif that leads to membrane tethering between the endoplasmic reticulum and late endosomes via interaction with VAPA and VAPB. Acts as a lipid transfer protein that redirects sterol to the endosome at the expense of the cell membrane and favors membrane formation inside endosomes. May also mediate cholesterol transport between other membranes, such as mitochondria membrane or cell membrane. However, such results need additional experimental evidences; probably mainly mediates cholesterol transport from the endoplasmic reticulum to endosomes. Does not activate transcriptional cholesterol sensing. Able to bind other lipids, such as lutein, a xanthophyll carotenoids that form the macular pigment of the retina. Able to bind other lipids, such as lutein, a xanthophyll carotenoids that form the macular pigment of the retina. This Macaca mulatta (Rhesus macaque) protein is StAR-related lipid transfer protein 3.